The sequence spans 445 residues: Argininosuccinate synthase (445 aa).

ATP contacts are provided by residues 17–25 and Ala43; that span reads AFSGGLDTS. An L-citrulline-binding site is contributed by Tyr99. ATP-binding residues include Gly129 and Thr131. Thr131, Asn135, and Asp136 together coordinate L-aspartate. Asn135 provides a ligand contact to L-citrulline. Asp136 is an ATP binding site. Positions 139 and 192 each coordinate L-citrulline. Asp194 provides a ligand contact to ATP. L-citrulline-binding residues include Thr201, Glu203, and Glu280.

The protein belongs to the argininosuccinate synthase family. Type 2 subfamily. Homotetramer.

The protein localises to the cytoplasm. The enzyme catalyses L-citrulline + L-aspartate + ATP = 2-(N(omega)-L-arginino)succinate + AMP + diphosphate + H(+). Its pathway is amino-acid biosynthesis; L-arginine biosynthesis; L-arginine from L-ornithine and carbamoyl phosphate: step 2/3. The protein is Argininosuccinate synthase of Acidobacterium capsulatum (strain ATCC 51196 / DSM 11244 / BCRC 80197 / JCM 7670 / NBRC 15755 / NCIMB 13165 / 161).